Consider the following 243-residue polypeptide: 7-cyano-7-deazaguanine synthase (243 aa).

Position 18 to 28 (18 to 28) interacts with ATP; the sequence is FSGGQDSATCL. Residues Cys-206, Cys-221, Cys-224, and Cys-227 each coordinate Zn(2+).

It belongs to the QueC family. The cofactor is Zn(2+).

The catalysed reaction is 7-carboxy-7-deazaguanine + NH4(+) + ATP = 7-cyano-7-deazaguanine + ADP + phosphate + H2O + H(+). The protein operates within purine metabolism; 7-cyano-7-deazaguanine biosynthesis. Its function is as follows. Catalyzes the ATP-dependent conversion of 7-carboxy-7-deazaguanine (CDG) to 7-cyano-7-deazaguanine (preQ(0)). This is 7-cyano-7-deazaguanine synthase from Methylorubrum extorquens (strain CM4 / NCIMB 13688) (Methylobacterium extorquens).